The primary structure comprises 204 residues: LexA repressor (204 aa).

The segment at residues 28-48 (RAEIANRLGFKSANAAEEHLK) is a DNA-binding region (H-T-H motif). Active-site for autocatalytic cleavage activity residues include Ser121 and Lys158.

The protein belongs to the peptidase S24 family. In terms of assembly, homodimer.

It catalyses the reaction Hydrolysis of Ala-|-Gly bond in repressor LexA.. In terms of biological role, represses a number of genes involved in the response to DNA damage (SOS response), including recA and lexA. In the presence of single-stranded DNA, RecA interacts with LexA causing an autocatalytic cleavage which disrupts the DNA-binding part of LexA, leading to derepression of the SOS regulon and eventually DNA repair. The sequence is that of LexA repressor from Shewanella frigidimarina (strain NCIMB 400).